The chain runs to 327 residues: MIVLADHHDRQFRYLRLSLTDVCNFRCGYCLPKGQQLDPQRPALLTLPEIRHLIEGFVALGIEKVRLTGGEPTLRSDLVDIVRAVAAVPGIRRVALTSNGWNLRDRLADLQAAGLTQLNLSLDSLDAARFQAITGSSRFEAVMAALEQAIALRLPILKVNAVLLKTLNYPQLSDFVEFVRDRPISIRFIELMQTLDNHDYFQQEFLSGSVLTEQWLAQGWQPIKRDRTAGPAQEYCHPNYQGKLGIIAPYSPNFCQNCNRLRVTSRGALRLCLFGTGEFDLRPWLQHPDQRSQLLEQVQQTLSFKTAGHQLAEANSGDTRNLATYGG.

Positions 7–232 (HHDRQFRYLR…IKRDRTAGPA (226 aa)) constitute a Radical SAM core domain. A GTP-binding site is contributed by Arg-16. Positions 23 and 27 each coordinate [4Fe-4S] cluster. Tyr-29 is a binding site for S-adenosyl-L-methionine. Position 30 (Cys-30) interacts with [4Fe-4S] cluster. Arg-66 is a binding site for GTP. An S-adenosyl-L-methionine-binding site is contributed by Gly-70. Position 97 (Thr-97) interacts with GTP. Ser-121 provides a ligand contact to S-adenosyl-L-methionine. Lys-158 contributes to the GTP binding site. S-adenosyl-L-methionine is bound at residue Met-192. Residues Cys-255 and Cys-258 each coordinate [4Fe-4S] cluster. 260 to 262 (RLR) provides a ligand contact to GTP. Cys-272 contributes to the [4Fe-4S] cluster binding site.

It belongs to the radical SAM superfamily. MoaA family. As to quaternary structure, monomer and homodimer. It depends on [4Fe-4S] cluster as a cofactor.

It catalyses the reaction GTP + AH2 + S-adenosyl-L-methionine = (8S)-3',8-cyclo-7,8-dihydroguanosine 5'-triphosphate + 5'-deoxyadenosine + L-methionine + A + H(+). It participates in cofactor biosynthesis; molybdopterin biosynthesis. Its function is as follows. Catalyzes the cyclization of GTP to (8S)-3',8-cyclo-7,8-dihydroguanosine 5'-triphosphate. The protein is GTP 3',8-cyclase of Synechococcus elongatus (strain ATCC 33912 / PCC 7942 / FACHB-805) (Anacystis nidulans R2).